We begin with the raw amino-acid sequence, 721 residues long: Polyribonucleotide nucleotidyltransferase (721 aa).

Residues Asp490 and Asp496 each coordinate Mg(2+). One can recognise a KH domain in the interval 557–623; that stretch reads PRIISIKINP…RIAGLTKEAK (67 aa). Positions 625–693 constitute an S1 motif domain; that stretch reads GEEYEGTVVK…DRGKIDLIRP (69 aa). The interval 693–721 is disordered; sequence PELEGKIAPREPRAPRGGGDRGPRPPRRD.

This sequence belongs to the polyribonucleotide nucleotidyltransferase family. Mg(2+) serves as cofactor.

The protein localises to the cytoplasm. The enzyme catalyses RNA(n+1) + phosphate = RNA(n) + a ribonucleoside 5'-diphosphate. Functionally, involved in mRNA degradation. Catalyzes the phosphorolysis of single-stranded polyribonucleotides processively in the 3'- to 5'-direction. This Deinococcus deserti (strain DSM 17065 / CIP 109153 / LMG 22923 / VCD115) protein is Polyribonucleotide nucleotidyltransferase.